The sequence spans 304 residues: Glycine--tRNA ligase alpha subunit (304 aa).

Belongs to the class-II aminoacyl-tRNA synthetase family. Tetramer of two alpha and two beta subunits.

The protein localises to the cytoplasm. It catalyses the reaction tRNA(Gly) + glycine + ATP = glycyl-tRNA(Gly) + AMP + diphosphate. This is Glycine--tRNA ligase alpha subunit from Pectobacterium carotovorum subsp. carotovorum (strain PC1).